We begin with the raw amino-acid sequence, 277 residues long: Phosphoenolpyruvate synthase regulatory protein (277 aa).

157 to 164 (GVSRCGKT) provides a ligand contact to ADP.

This sequence belongs to the pyruvate, phosphate/water dikinase regulatory protein family. PSRP subfamily.

It catalyses the reaction [pyruvate, water dikinase] + ADP = [pyruvate, water dikinase]-phosphate + AMP + H(+). The enzyme catalyses [pyruvate, water dikinase]-phosphate + phosphate + H(+) = [pyruvate, water dikinase] + diphosphate. In terms of biological role, bifunctional serine/threonine kinase and phosphorylase involved in the regulation of the phosphoenolpyruvate synthase (PEPS) by catalyzing its phosphorylation/dephosphorylation. The protein is Phosphoenolpyruvate synthase regulatory protein of Escherichia fergusonii (strain ATCC 35469 / DSM 13698 / CCUG 18766 / IAM 14443 / JCM 21226 / LMG 7866 / NBRC 102419 / NCTC 12128 / CDC 0568-73).